The following is a 1173-amino-acid chain: DNA-directed RNA polymerase subunit beta (1173 aa).

The protein belongs to the RNA polymerase beta chain family. In terms of assembly, the RNAP catalytic core consists of 2 alpha, 1 beta, 1 beta' and 1 omega subunit. When a sigma factor is associated with the core the holoenzyme is formed, which can initiate transcription.

It carries out the reaction RNA(n) + a ribonucleoside 5'-triphosphate = RNA(n+1) + diphosphate. DNA-dependent RNA polymerase catalyzes the transcription of DNA into RNA using the four ribonucleoside triphosphates as substrates. The protein is DNA-directed RNA polymerase subunit beta of Kosmotoga olearia (strain ATCC BAA-1733 / DSM 21960 / TBF 19.5.1).